Reading from the N-terminus, the 601-residue chain is Threonine dehydratase (601 aa).

A chloroplast-targeting transit peptide spans 1–51 (MEVLCQAPAGNSNFACNPKFTAIRTRAISSNDTFKVISSTGNNKKMKGAIR). 2 ACT-like domains span residues 427-499 (ALLA…NLTN) and 521-592 (IFCQ…IESL).

This sequence belongs to the serine/threonine dehydratase family. It depends on pyridoxal 5'-phosphate as a cofactor.

The protein resides in the plastid. It is found in the chloroplast. It catalyses the reaction L-threonine = 2-oxobutanoate + NH4(+). Its pathway is amino-acid biosynthesis; L-isoleucine biosynthesis; 2-oxobutanoate from L-threonine: step 1/1. Its function is as follows. Catalyzes the conversion of threonine to alpha-keto butyrate in isoleucine (Ile) biosynthesis. Required for JA-Ile biosynthesis, a signaling molecule involved in defense and resistance to the herbivore Manduca sexta caterpillars. The chain is Threonine dehydratase from Nicotiana attenuata (Coyote tobacco).